Consider the following 970-residue polypeptide: Sodium/calcium exchanger 1 (970 aa).

The first 32 residues, 1–32, serve as a signal peptide directing secretion; that stretch reads MLRLSLPPNVSMGFRLVALVALLFSHVDHITA. Residues 33-71 lie on the Extracellular side of the membrane; the sequence is DTEAETGGNETTECTGSYYCKKGVILPIWEPQDPSFGDK. Residue Asn41 is glycosylated (N-linked (GlcNAc...) asparagine). The chain crosses the membrane as a helical span at residues 72–92; it reads IARATVYFVAMVYMFLGVSII. Over 93 to 133 the chain is Cytoplasmic; the sequence is ADRFMSSIEVITSQEKEITIKKPNGETTKTTVRIWNETVSN. The helical transmembrane segment at 134 to 154 threads the bilayer; that stretch reads LTLMALGSSAPEILLSVIEVC. The Alpha-1 repeat unit spans residues 138-178; that stretch reads ALGSSAPEILLSVIEVCGHNFTAGDLGPSTIVGSAAFNMFI. Residues 155–167 lie on the Extracellular side of the membrane; it reads GHNFTAGDLGPST. An N-linked (GlcNAc...) asparagine glycan is attached at Asn157. Residues 168–188 form a helical membrane-spanning segment; sequence IVGSAAFNMFIIIALCVYVVP. The Cytoplasmic portion of the chain corresponds to 189–201; that stretch reads DGETRKIKHLRVF. Residues 202–222 form a helical membrane-spanning segment; that stretch reads FVTAAWSIFAYTWLYIILSVS. Residues 223–228 lie on the Extracellular side of the membrane; sequence SPGVVE. A helical membrane pass occupies residues 229 to 249; it reads VWEGLLTFFFFPICVVFAWVA. At 250-797 the chain is on the cytoplasmic side; sequence DRRLLFYKYV…FVPPTEYWNG (548 aa). The segment at 251 to 270 is putative calmodulin-binding region; the sequence is RRLLFYKYVYKRYRAGKQRG. Residues Ser282 and Ser389 each carry the phosphoserine modification. 2 consecutive Calx-beta domains span residues 393 to 493 and 524 to 624; these read VNME…VHLS and ATIT…IEIG. Positions 417, 453, 478, 479, 481, 483, 486, 530, 531, 532, 548, 584, 610, 611, 612, and 715 each coordinate Ca(2+). Residues 798–818 form a helical membrane-spanning segment; that stretch reads WACFIVSILMIGLLTAFIGDL. At 819-821 the chain is on the extracellular side; it reads ASH. The chain crosses the membrane as a helical span at residues 822-842; sequence FGCTIGLKDSVTAVVFVALGT. The Alpha-2 repeat unit spans residues 839-875; sequence ALGTSVPDTFASKVAATQDQYADASIGNVTGSNAVNV. Topologically, residues 843–871 are cytoplasmic; the sequence is SVPDTFASKVAATQDQYADASIGNVTGSN. The helical transmembrane segment at 872–892 threads the bilayer; sequence AVNVFLGIGVAWSIAAIYHAA. Residues 893–903 are Extracellular-facing; sequence NGEQFKVSPGT. A helical membrane pass occupies residues 904 to 924; that stretch reads LAFSVTLFTIFAFINVGVLLY. Over 925–941 the chain is Cytoplasmic; sequence RRRPEIGGELGGPRTAK. Residues 942 to 962 form a helical membrane-spanning segment; the sequence is LLTSSLFVLLWLLYIFFSSLE. The Extracellular portion of the chain corresponds to 963–970; that stretch reads AYCHIKGF.

Belongs to the Ca(2+):cation antiporter (CaCA) (TC 2.A.19) family. SLC8 subfamily. In terms of tissue distribution, detected in heart, kidney and brain (at protein level).

It is found in the cell membrane. It catalyses the reaction Ca(2+)(in) + 3 Na(+)(out) = Ca(2+)(out) + 3 Na(+)(in). Its activity is regulated as follows. Activated by micromolar levels of Ca(2+). Mediates the exchange of one Ca(2+) ion against three to four Na(+) ions across the cell membrane, and thereby contributes to the regulation of cytoplasmic Ca(2+) levels and Ca(2+)-dependent cellular processes. Contributes to Ca(2+) transport during excitation-contraction coupling in muscle. In a first phase, voltage-gated channels mediate the rapid increase of cytoplasmic Ca(2+) levels due to release of Ca(2+) stores from the endoplasmic reticulum. SLC8A1 mediates the export of Ca(2+) from the cell during the next phase, so that cytoplasmic Ca(2+) levels rapidly return to baseline. Required for normal embryonic heart development and the onset of heart contractions. The polypeptide is Sodium/calcium exchanger 1 (Slc8a1) (Mus musculus (Mouse)).